A 555-amino-acid chain; its full sequence is Synaptotagmin-14 (555 aa).

Topologically, residues 1–24 (MAIEGGERTCGVHELICIRKVSPE) are extracellular. Residues 25 to 47 (AVGFLSAVGVFIVLMLLLFLYIN) traverse the membrane as a helical; Signal-anchor for type III membrane protein segment. The Cytoplasmic portion of the chain corresponds to 48–555 (KKFCFENVGG…VCRWHALLES (508 aa)). 3 disordered regions span residues 76-97 (YNSYMDRDEPGSSSESEDEALG), 157-179 (TPPLDELQPPPYQDDSGSPHLSC), and 205-258 (CPSE…PEPE). Basic and acidic residues predominate over residues 211-224 (TGHEAESYHNKGYE). 2 C2 domains span residues 260–379 (KYGT…SLPV) and 415–550 (SVPE…CRWH).

It belongs to the synaptotagmin family. In terms of assembly, homodimer. Can also form heterodimers. Expressed in heart and testis. Expressed in brain (especially in the cerebellum).

It localises to the membrane. May be involved in the trafficking and exocytosis of secretory vesicles in non-neuronal tissues. Is Ca(2+)-independent. This chain is Synaptotagmin-14 (Syt14), found in Mus musculus (Mouse).